A 106-amino-acid chain; its full sequence is Large ribosomal subunit protein bL21 (106 aa).

The protein belongs to the bacterial ribosomal protein bL21 family. As to quaternary structure, part of the 50S ribosomal subunit. Contacts protein L20.

This protein binds to 23S rRNA in the presence of protein L20. This Xanthomonas euvesicatoria pv. vesicatoria (strain 85-10) (Xanthomonas campestris pv. vesicatoria) protein is Large ribosomal subunit protein bL21.